The sequence spans 286 residues: CDP-diacylglycerol--serine O-phosphatidyltransferase (286 aa).

6 helical membrane passes run 15–35, 74–94, 95–115, 135–155, 167–187, and 207–227; these read ILPSAMTVLSICAGLTAIKFA, IDSLADAVNFGVTPALVLYVS, MLSKWPVGWVVVLLYAVCVVL, EFFVGMPAPAGAVSMIGLLAL, GWFLSFWVTGTSILLVSGIPM, and LAICAAAAVLAPYLLIWVIII.

The protein belongs to the CDP-alcohol phosphatidyltransferase class-I family.

It is found in the cell membrane. It carries out the reaction a CDP-1,2-diacyl-sn-glycerol + L-serine = a 1,2-diacyl-sn-glycero-3-phospho-L-serine + CMP + H(+). The chain is CDP-diacylglycerol--serine O-phosphatidyltransferase (pssA) from Mycobacterium tuberculosis (strain ATCC 25618 / H37Rv).